The sequence spans 158 residues: Snaclec crotocetin-1 (158 aa).

The first 23 residues, 1–23 (MGRFIFVSFGLLVVFLSLSGTGA), serve as a signal peptide directing secretion. Cystine bridges form between Cys-27-Cys-38, Cys-55-Cys-152, and Cys-127-Cys-144. Residues 34-153 (YDQYCYRVIK…CEEKNLFVCK (120 aa)) enclose the C-type lectin domain.

Belongs to the snaclec family. As to quaternary structure, heterodimer; disulfide-linked. In terms of tissue distribution, expressed by the venom gland.

The protein resides in the secreted. Interferes with one step of hemostasis (modulation of platelet aggregation, or coagulation cascade, for example). This Crotalus durissus terrificus (South American rattlesnake) protein is Snaclec crotocetin-1.